The chain runs to 262 residues: Zinc import ATP-binding protein ZnuC (262 aa).

An ABC transporter domain is found at 4 to 220 (LNLSGVRLSH…PEYLALFGPR (217 aa)). 36–43 (GPNGAGKS) is an ATP binding site. The interval 238-262 (ADGSVLPLAEGGGEPHTHGPGCRHG) is disordered.

The protein belongs to the ABC transporter superfamily. Zinc importer (TC 3.A.1.15.5) family. The complex is composed of two ATP-binding proteins (ZnuC), two transmembrane proteins (ZnuB) and a solute-binding protein (ZnuA).

It localises to the cell inner membrane. It catalyses the reaction Zn(2+)(out) + ATP(in) + H2O(in) = Zn(2+)(in) + ADP(in) + phosphate(in) + H(+)(in). In terms of biological role, part of the ABC transporter complex ZnuABC involved in zinc import. Responsible for energy coupling to the transport system. The chain is Zinc import ATP-binding protein ZnuC from Paramagnetospirillum magneticum (strain ATCC 700264 / AMB-1) (Magnetospirillum magneticum).